The sequence spans 692 residues: Paramyosin (692 aa).

The tract at residues 1-15 (MNKKRDSELAKLRKL) is nonhelical region. The stretch at 16–692 (LEDVHIESEE…DHRVKELLLQ (677 aa)) forms a coiled coil. The disordered stretch occupies residues 26–57 (TAHHLRQKHQAAIQEMQDQLDQLQKAKNKSDK).

The protein belongs to the paramyosin family. In terms of assembly, homodimer.

The protein localises to the cytoplasm. It localises to the myofibril. In terms of biological role, paramyosin is a major structural component of many thick filaments isolated from invertebrate muscles. The polypeptide is Paramyosin (Dermatophagoides farinae (American house dust mite)).